Reading from the N-terminus, the 50-residue chain is MTQTVKNFGRGANECKRCGRKQGLVRKYGIYLCRHCFREIAHDMGFEKYS.

The Zn(2+) site is built by C15, C18, C33, and C36.

Belongs to the universal ribosomal protein uS14 family. Zinc-binding uS14 subfamily. As to quaternary structure, part of the 30S ribosomal subunit. It depends on Zn(2+) as a cofactor.

Functionally, binds 16S rRNA, required for the assembly of 30S particles. The chain is Small ribosomal subunit protein uS14 from Methanococcoides burtonii (strain DSM 6242 / NBRC 107633 / OCM 468 / ACE-M).